An 85-amino-acid chain; its full sequence is Beta-toxin Ct6 (85 aa).

The signal sequence occupies residues 1–18 (MKTFVLALCLVLIGMVYA). Residues 19–84 (KDGYLVSKHT…VYPLPNKSCG (66 aa)) enclose the LCN-type CS-alpha/beta domain. Cystine bridges form between cysteine 30–cysteine 83, cysteine 34–cysteine 59, cysteine 43–cysteine 64, and cysteine 47–cysteine 66. At cysteine 83 the chain carries Cysteine amide.

This sequence belongs to the long (4 C-C) scorpion toxin superfamily. Sodium channel inhibitor family. Beta subfamily. In terms of tissue distribution, expressed by the venom gland.

It is found in the secreted. Its function is as follows. Beta toxins bind voltage-independently at site-4 of sodium channels (Nav) and shift the voltage of activation toward more negative potentials thereby affecting sodium channel activation and promoting spontaneous and repetitive firing. The polypeptide is Beta-toxin Ct6 (Centruroides tecomanus (Scorpion)).